Reading from the N-terminus, the 324-residue chain is uncharacterized protein (324 aa).

It to the C-terminal of para-aminobenzoate synthase component I.

This is an uncharacterized protein from Pasteurella multocida (strain Pm70).